A 185-amino-acid chain; its full sequence is ATP synthase subunit b, chloroplastic (185 aa).

A helical membrane pass occupies residues Leu31–Leu49.

Belongs to the ATPase B chain family. As to quaternary structure, F-type ATPases have 2 components, F(1) - the catalytic core - and F(0) - the membrane proton channel. F(1) has five subunits: alpha(3), beta(3), gamma(1), delta(1), epsilon(1). F(0) has four main subunits: a(1), b(1), b'(1) and c(10-14). The alpha and beta chains form an alternating ring which encloses part of the gamma chain. F(1) is attached to F(0) by a central stalk formed by the gamma and epsilon chains, while a peripheral stalk is formed by the delta, b and b' chains.

It localises to the plastid. It is found in the chloroplast thylakoid membrane. Its function is as follows. F(1)F(0) ATP synthase produces ATP from ADP in the presence of a proton or sodium gradient. F-type ATPases consist of two structural domains, F(1) containing the extramembraneous catalytic core and F(0) containing the membrane proton channel, linked together by a central stalk and a peripheral stalk. During catalysis, ATP synthesis in the catalytic domain of F(1) is coupled via a rotary mechanism of the central stalk subunits to proton translocation. In terms of biological role, component of the F(0) channel, it forms part of the peripheral stalk, linking F(1) to F(0). This chain is ATP synthase subunit b, chloroplastic, found in Huperzia lucidula (Shining clubmoss).